We begin with the raw amino-acid sequence, 294 residues long: Acetylglutamate kinase (294 aa).

Substrate contacts are provided by residues 63 to 64, R85, and N188; that span reads GG.

Belongs to the acetylglutamate kinase family. ArgB subfamily.

The protein resides in the cytoplasm. The enzyme catalyses N-acetyl-L-glutamate + ATP = N-acetyl-L-glutamyl 5-phosphate + ADP. It participates in amino-acid biosynthesis; L-arginine biosynthesis; N(2)-acetyl-L-ornithine from L-glutamate: step 2/4. Catalyzes the ATP-dependent phosphorylation of N-acetyl-L-glutamate. This is Acetylglutamate kinase from Methanococcus vannielii (strain ATCC 35089 / DSM 1224 / JCM 13029 / OCM 148 / SB).